The primary structure comprises 239 residues: Pyridoxine 5'-phosphate synthase (239 aa).

Position 7 (Asn7) interacts with 3-amino-2-oxopropyl phosphate. 9 to 10 (DH) contacts 1-deoxy-D-xylulose 5-phosphate. Arg18 is a binding site for 3-amino-2-oxopropyl phosphate. The active-site Proton acceptor is the His43. 1-deoxy-D-xylulose 5-phosphate contacts are provided by Arg45 and His50. Glu70 serves as the catalytic Proton acceptor. Thr100 lines the 1-deoxy-D-xylulose 5-phosphate pocket. His192 serves as the catalytic Proton donor. Residues Gly193 and 214–215 (GH) contribute to the 3-amino-2-oxopropyl phosphate site.

It belongs to the PNP synthase family. As to quaternary structure, homooctamer; tetramer of dimers.

It is found in the cytoplasm. It catalyses the reaction 3-amino-2-oxopropyl phosphate + 1-deoxy-D-xylulose 5-phosphate = pyridoxine 5'-phosphate + phosphate + 2 H2O + H(+). Its pathway is cofactor biosynthesis; pyridoxine 5'-phosphate biosynthesis; pyridoxine 5'-phosphate from D-erythrose 4-phosphate: step 5/5. In terms of biological role, catalyzes the complicated ring closure reaction between the two acyclic compounds 1-deoxy-D-xylulose-5-phosphate (DXP) and 3-amino-2-oxopropyl phosphate (1-amino-acetone-3-phosphate or AAP) to form pyridoxine 5'-phosphate (PNP) and inorganic phosphate. This chain is Pyridoxine 5'-phosphate synthase, found in Pelagibacter ubique (strain HTCC1062).